A 297-amino-acid polypeptide reads, in one-letter code: N-acetylmuramic acid 6-phosphate etherase (297 aa).

In terms of domain architecture, SIS spans 56–219 (AIEAFNKGGR…STISMIGIGK (164 aa)). The active-site Proton donor is glutamate 84. Glutamate 115 is a catalytic residue.

The protein belongs to the GCKR-like family. MurNAc-6-P etherase subfamily. In terms of assembly, homodimer.

It catalyses the reaction N-acetyl-D-muramate 6-phosphate + H2O = N-acetyl-D-glucosamine 6-phosphate + (R)-lactate. The protein operates within amino-sugar metabolism; N-acetylmuramate degradation. Its function is as follows. Specifically catalyzes the cleavage of the D-lactyl ether substituent of MurNAc 6-phosphate, producing GlcNAc 6-phosphate and D-lactate. The protein is N-acetylmuramic acid 6-phosphate etherase of Lactococcus lactis subsp. cremoris (strain MG1363).